The primary structure comprises 387 residues: Postreplication repair E3 ubiquitin-protein ligase rad18 (387 aa).

The RING-type zinc-finger motif lies at 29–67 (CLICHEYFRAPLITSCSHTFCSFCIRDYLREHPMCPACR). The disordered stretch occupies residues 119–153 (DSASGDEEWEDDLASNSSPASIAKKTSRDSKKRKR). Residues 122 to 131 (SGDEEWEDDL) are compositionally biased toward acidic residues. A UBZ4-type zinc finger spans residues 156 to 183 (LVHCPACSNLVPHNQINQHLDSCLNSPS). Zn(2+)-binding residues include Cys-159, Cys-162, His-174, and Cys-178. The segment at 174–206 (HLDSCLNSPSSPSSSSSPYKNKDNSKSNSLLSF) is disordered. The segment covering 177–192 (SCLNSPSSPSSSSSPY) has biased composition (low complexity). The region spanning 240–274 (YALLSESKIRSKLSEMGLPTDGHKQLLQRRHAKWV) is the SAP domain. The interval 335-387 (KQSTTNKNDSLRNTAVESSTEPSTSNGFPATSVSPPLTIDLTNSQTGSDGPQS) is disordered.

The protein belongs to the RAD18 family. As to quaternary structure, interacts with E2 ubc2, forming a complex with ubiquitin ligase activity.

The protein resides in the nucleus. The enzyme catalyses S-ubiquitinyl-[E2 ubiquitin-conjugating enzyme]-L-cysteine + [acceptor protein]-L-lysine = [E2 ubiquitin-conjugating enzyme]-L-cysteine + N(6)-ubiquitinyl-[acceptor protein]-L-lysine.. It functions in the pathway protein modification; protein ubiquitination. E3 RING-finger protein, member of the UBC2/RAD6 epistasis group. Associates to the E2 ubiquitin conjugating enzyme ubc2/rad6 to form the ubc2-rad18 ubiquitin ligase complex involved in postreplicative repair (PRR) of damaged DNA. In Schizosaccharomyces pombe (strain 972 / ATCC 24843) (Fission yeast), this protein is Postreplication repair E3 ubiquitin-protein ligase rad18 (rhp18).